The sequence spans 508 residues: Photosystem II CP47 reaction center protein (508 aa).

The next 6 membrane-spanning stretches (helical) occupy residues 21 to 36 (AVHIMHTALVSGWAGS), 101 to 115 (IILSGLLFLAAIWHW), 140 to 156 (GIHLFLSGLLCFGFGAF), 203 to 218 (IAAGILGILAGLFHLS), 237 to 252 (VLSSSIAAVFWAAFVV), and 457 to 472 (NFALLFFFGHIWHGGR).

Belongs to the PsbB/PsbC family. PsbB subfamily. PSII is composed of 1 copy each of membrane proteins PsbA, PsbB, PsbC, PsbD, PsbE, PsbF, PsbH, PsbI, PsbJ, PsbK, PsbL, PsbM, PsbT, PsbX, PsbY, PsbZ, Psb30/Ycf12, at least 3 peripheral proteins of the oxygen-evolving complex and a large number of cofactors. It forms dimeric complexes. Requires Binds multiple chlorophylls. PSII binds additional chlorophylls, carotenoids and specific lipids. as cofactor.

The protein localises to the plastid. Its subcellular location is the chloroplast thylakoid membrane. Its function is as follows. One of the components of the core complex of photosystem II (PSII). It binds chlorophyll and helps catalyze the primary light-induced photochemical processes of PSII. PSII is a light-driven water:plastoquinone oxidoreductase, using light energy to abstract electrons from H(2)O, generating O(2) and a proton gradient subsequently used for ATP formation. In Chaetosphaeridium globosum (Charophycean green alga), this protein is Photosystem II CP47 reaction center protein.